The primary structure comprises 405 residues: Glucose-1-phosphate adenylyltransferase (405 aa).

Alpha-D-glucose 1-phosphate is bound by residues glycine 164, 179–180 (EK), and serine 197.

It belongs to the bacterial/plant glucose-1-phosphate adenylyltransferase family. Homotetramer.

It carries out the reaction alpha-D-glucose 1-phosphate + ATP + H(+) = ADP-alpha-D-glucose + diphosphate. It participates in glycan biosynthesis; glycogen biosynthesis. Functionally, involved in the biosynthesis of ADP-glucose, a building block required for the elongation reactions to produce glycogen. Catalyzes the reaction between ATP and alpha-D-glucose 1-phosphate (G1P) to produce pyrophosphate and ADP-Glc. The polypeptide is Glucose-1-phosphate adenylyltransferase (Corynebacterium jeikeium (strain K411)).